The following is a 1362-amino-acid chain: DNA-directed RNA polymerase subunit beta'' (1362 aa).

Positions 224, 295, 302, and 305 each coordinate Zn(2+).

This sequence belongs to the RNA polymerase beta' chain family. RpoC2 subfamily. In terms of assembly, in plastids the minimal PEP RNA polymerase catalytic core is composed of four subunits: alpha, beta, beta', and beta''. When a (nuclear-encoded) sigma factor is associated with the core the holoenzyme is formed, which can initiate transcription. Zn(2+) is required as a cofactor.

The protein resides in the plastid. The protein localises to the chloroplast. It catalyses the reaction RNA(n) + a ribonucleoside 5'-triphosphate = RNA(n+1) + diphosphate. DNA-dependent RNA polymerase catalyzes the transcription of DNA into RNA using the four ribonucleoside triphosphates as substrates. This is DNA-directed RNA polymerase subunit beta'' from Helianthus annuus (Common sunflower).